The chain runs to 170 residues: Guided entry of tail-anchored proteins factor 1 (170 aa).

Residues Met1–Asn6 lie on the Lumenal side of the membrane. A helical transmembrane segment spans residues Trp7–Ile27. Residues Ser28–Met96 are Cytoplasmic-facing. The tract at residues Phe35–Gln93 is interaction with GET3/TRC40. Positions Met61–Ala91 form a coiled coil. A helical transmembrane segment spans residues Lys97–Leu117. At Lys118–Arg137 the chain is on the lumenal side. A helical membrane pass occupies residues Leu138–Cys158. The Cytoplasmic segment spans residues Asn159–Ser170.

The protein belongs to the WRB/GET1 family. As to quaternary structure, component of the Golgi to ER traffic (GET) complex, which is composed of GET1/WRB, CAMLG/GET2 and GET3/TRC40. Within the complex, GET1 and CAMLG form a heterotetramer which is stabilized by phosphatidylinositol binding and which binds to the GET3 homodimer.

Its subcellular location is the endoplasmic reticulum membrane. In terms of biological role, required for the post-translational delivery of tail-anchored (TA) proteins to the endoplasmic reticulum (ER). Together with CAMLG/GET2, acts as a membrane receptor for soluble GET3/TRC40, which recognizes and selectively binds the transmembrane domain of TA proteins in the cytosol. Required to ensure correct topology and ER insertion of CAMLG. The chain is Guided entry of tail-anchored proteins factor 1 from Danio rerio (Zebrafish).